A 27-amino-acid chain; its full sequence is Bombinin-like peptide 2 (27 aa).

Asparagine amide is present on N27.

It belongs to the bombinin family. As to expression, expressed by the skin glands.

The protein resides in the secreted. Has antimicrobial activity, but no hemolytic activity. Preference on killing Gram-negative non-enteric bacteria. The chain is Bombinin-like peptide 2 from Bombina orientalis (Oriental fire-bellied toad).